The chain runs to 270 residues: Undecaprenyl-diphosphatase (270 aa).

Helical transmembrane passes span 14 to 34 (GLTEVLPISSSAHLILIPTFL), 40 to 60 (GITFDVALHLGTFIALCLYFW), 88 to 108 (FYIIAGTFPAAIVGKLFETTI), 117 to 137 (SLIALFLIVFALLLAFADTSG), 146 to 166 (ITLKSAIIIGLAQCLALIPGV), 189 to 209 (FSFLLSLPIVAGAALFELSGL), 221 to 241 (PLLIGIATSAVFGYISVAFLL), and 249 to 269 (LYPFVWYRIAIGCLALVFINF).

This sequence belongs to the UppP family.

Its subcellular location is the cell inner membrane. The catalysed reaction is di-trans,octa-cis-undecaprenyl diphosphate + H2O = di-trans,octa-cis-undecaprenyl phosphate + phosphate + H(+). Its function is as follows. Catalyzes the dephosphorylation of undecaprenyl diphosphate (UPP). Confers resistance to bacitracin. The protein is Undecaprenyl-diphosphatase of Geotalea daltonii (strain DSM 22248 / JCM 15807 / FRC-32) (Geobacter daltonii).